The sequence spans 184 residues: Succinate dehydrogenase cytochrome b560 subunit, mitochondrial (184 aa).

The chain crosses the membrane as a helical span at residues 65 to 94 (LTWMLSGFHRISGCVMAGTLLVGGLGFAVL). The Mitochondrial intermembrane segment spans residues 95–114 (PLDFTTFVEYIRGWNLPCAV). A helical membrane pass occupies residues 115-139 (TAVFKYIIAFPIIFHTLNGIRFLGF). His-129 provides a ligand contact to heme. At 140–147 (DLAKGVDN) the chain is on the mitochondrial matrix side. Residues 148 to 169 (IGQVYKSGWLVFGVSAVIALAI) traverse the membrane as a helical segment. At 170-172 (VIN) the chain is on the mitochondrial intermembrane side.

It belongs to the cytochrome b560 family. In terms of assembly, component of complex II composed of four subunits: a flavoprotein (FP), iron-sulfur protein (IP), and a cytochrome b560 composed of two transmembrane proteins. Heme serves as cofactor.

It is found in the mitochondrion inner membrane. Its pathway is carbohydrate metabolism; tricarboxylic acid cycle. Membrane-anchoring subunit of succinate dehydrogenase (SDH) that is involved in complex II of the mitochondrial electron transport chain and is responsible for transferring electrons from succinate to ubiquinone (coenzyme Q). Mediates resistance to enteropathogenic E.coli infection. The sequence is that of Succinate dehydrogenase cytochrome b560 subunit, mitochondrial (mev-1) from Caenorhabditis briggsae.